Here is a 502-residue protein sequence, read N- to C-terminus: Lysine--tRNA ligase (502 aa).

2 residues coordinate Mg(2+): Glu-403 and Glu-410.

Belongs to the class-II aminoacyl-tRNA synthetase family. In terms of assembly, homodimer. Requires Mg(2+) as cofactor.

Its subcellular location is the cytoplasm. It catalyses the reaction tRNA(Lys) + L-lysine + ATP = L-lysyl-tRNA(Lys) + AMP + diphosphate. This Parasynechococcus marenigrum (strain WH8102) protein is Lysine--tRNA ligase.